The chain runs to 245 residues: MIIPALDLIDGVVVRLHQGDYARQRDYGNDPLPRLQDYVAQGAEVLHLVDLTGAKDPANRQISLIKTLVAGVNVPVQIGGGVRTEEDVAALLEAGVARVVVGSTAVKSPEVVKGWFERFGAQALVLALDVRIDEHGNKQVAVSGWQENSGISLEQLVETYLPVGLKHVLCTDISRDGTLAGSNVSLYQEVCARYPQIAFQSSGGIGDIDDIAALRGTGVHGVIVGRALLEGKFTVKEAIQCWQNA.

The Proton acceptor role is filled by aspartate 7. The Proton donor role is filled by aspartate 129.

It belongs to the HisA/HisF family.

Its subcellular location is the cytoplasm. It carries out the reaction 1-(5-phospho-beta-D-ribosyl)-5-[(5-phospho-beta-D-ribosylamino)methylideneamino]imidazole-4-carboxamide = 5-[(5-phospho-1-deoxy-D-ribulos-1-ylimino)methylamino]-1-(5-phospho-beta-D-ribosyl)imidazole-4-carboxamide. It functions in the pathway amino-acid biosynthesis; L-histidine biosynthesis; L-histidine from 5-phospho-alpha-D-ribose 1-diphosphate: step 4/9. The sequence is that of 1-(5-phosphoribosyl)-5-[(5-phosphoribosylamino)methylideneamino] imidazole-4-carboxamide isomerase from Salmonella arizonae (strain ATCC BAA-731 / CDC346-86 / RSK2980).